Consider the following 96-residue polypeptide: Large ribosomal subunit protein eL14 (96 aa).

Belongs to the eukaryotic ribosomal protein eL14 family.

The chain is Large ribosomal subunit protein eL14 from Metallosphaera sedula (strain ATCC 51363 / DSM 5348 / JCM 9185 / NBRC 15509 / TH2).